The primary structure comprises 80 residues: Acyl carrier protein (80 aa).

Residues 4 to 79 form the Carrier domain; it reads EAILEKVRSI…DAVKYIEDKQ (76 aa). Residue Ser39 is modified to O-(pantetheine 4'-phosphoryl)serine.

It belongs to the acyl carrier protein (ACP) family. In terms of processing, 4'-phosphopantetheine is transferred from CoA to a specific serine of apo-ACP by AcpS. This modification is essential for activity because fatty acids are bound in thioester linkage to the sulfhydryl of the prosthetic group.

Its subcellular location is the cytoplasm. It participates in lipid metabolism; fatty acid biosynthesis. Functionally, carrier of the growing fatty acid chain in fatty acid biosynthesis. The chain is Acyl carrier protein from Prochlorococcus marinus (strain MIT 9313).